We begin with the raw amino-acid sequence, 347 residues long: GMP reductase (347 aa).

108–131 (ADFEKTKQILDLNPALNFVCIDVA) is a binding site for NADP(+). K(+) is bound by residues G181 and G183. C186 serves as the catalytic Thioimidate intermediate. Residue 216–239 (IVSDGGCTTPGDVAKAFGGGADFV) participates in NADP(+) binding.

Belongs to the IMPDH/GMPR family. GuaC type 1 subfamily. In terms of assembly, homotetramer.

The enzyme catalyses IMP + NH4(+) + NADP(+) = GMP + NADPH + 2 H(+). Functionally, catalyzes the irreversible NADPH-dependent deamination of GMP to IMP. It functions in the conversion of nucleobase, nucleoside and nucleotide derivatives of G to A nucleotides, and in maintaining the intracellular balance of A and G nucleotides. This Escherichia coli O139:H28 (strain E24377A / ETEC) protein is GMP reductase.